The primary structure comprises 522 residues: Transcription factor SPT20 homolog (522 aa).

Ser-284 carries the phosphoserine modification. Disordered regions lie at residues 361–380 and 408–522; these read DEES…DHSN and PVKM…RHES. Over residues 412–425 the composition is skewed to low complexity; sequence SHSSSGSASLSQVS. Over residues 433–442 the composition is skewed to polar residues; that stretch reads TETVSVQSSV. The segment covering 458-467 has biased composition (low complexity); it reads SSSGNSSSGN. Over residues 481 to 492 the composition is skewed to pro residues; it reads PTPPPSSKPPTI. At Thr-482 the chain carries Phosphothreonine. Residues 506–522 show a composition bias toward low complexity; the sequence is LSPAALSPASSSQRHES. 2 positions are modified to phosphoserine: Ser-507 and Ser-512.

The protein belongs to the SPT20 family. As to quaternary structure, interacts with ATG9A. Interacts with MAPK14.

Functionally, required for MAP kinase p38 (MAPK11, MAPK12, MAPK13 and/or MAPK14) activation during gastrulation. Required for down-regulation of E-cadherin during gastrulation by regulating E-cadherin protein level downstream from NCK-interacting kinase (NIK) and independently of the regulation of transcription by FGF signaling and Snail. Required for starvation-induced ATG9A trafficking during autophagy. The sequence is that of Transcription factor SPT20 homolog (SUPT20H) from Pongo abelii (Sumatran orangutan).